Here is a 315-residue protein sequence, read N- to C-terminus: Ribonuclease Z (315 aa).

Positions 61, 63, 65, 66, 151, 219, and 278 each coordinate Zn(2+). The active-site Proton acceptor is Asp-65.

The protein belongs to the RNase Z family. In terms of assembly, homodimer. Zn(2+) is required as a cofactor.

The catalysed reaction is Endonucleolytic cleavage of RNA, removing extra 3' nucleotides from tRNA precursor, generating 3' termini of tRNAs. A 3'-hydroxy group is left at the tRNA terminus and a 5'-phosphoryl group is left at the trailer molecule.. Its function is as follows. Zinc phosphodiesterase, which displays some tRNA 3'-processing endonuclease activity. Probably involved in tRNA maturation, by removing a 3'-trailer from precursor tRNA. The sequence is that of Ribonuclease Z from Clostridium botulinum (strain Alaska E43 / Type E3).